The primary structure comprises 184 residues: Photosystem I assembly protein Ycf4 (184 aa).

Helical transmembrane passes span 22–42 (FCWAIILFLGSLGFLLVGTSS) and 57–77 (IVFFPQGIVMSFYGIAGLFIS).

The protein belongs to the Ycf4 family.

It localises to the plastid. The protein resides in the chloroplast thylakoid membrane. Functionally, seems to be required for the assembly of the photosystem I complex. This chain is Photosystem I assembly protein Ycf4, found in Helianthus annuus (Common sunflower).